Consider the following 306-residue polypeptide: tRNA pseudouridine synthase B (306 aa).

The Nucleophile role is filled by D43.

This sequence belongs to the pseudouridine synthase TruB family. Type 1 subfamily.

The catalysed reaction is uridine(55) in tRNA = pseudouridine(55) in tRNA. Its function is as follows. Responsible for synthesis of pseudouridine from uracil-55 in the psi GC loop of transfer RNAs. The sequence is that of tRNA pseudouridine synthase B from Anaplasma marginale (strain St. Maries).